Here is a 330-residue protein sequence, read N- to C-terminus: Calponin-3 (330 aa).

K23 is modified (N6-acetyllysine). Residues 26–130 enclose the Calponin-homology (CH) domain; that stretch reads QQAEEDLRNW…TLVALAGLAK (105 aa). At K158 the chain carries N6-methyllysine. 3 Calponin-like repeats span residues 164 to 189, 204 to 229, and 243 to 268; these read IGLQ…RHLY, ISLQ…RDIY, and ISLQ…RQVY. The disordered stretch occupies residues 279–330; the sequence is PVIHNGSQGTGTNGSEISDSDYQAEYPDEYHGEYPDDYPREYQYGDDQGIDY. Residues 306 to 318 are compositionally biased toward basic and acidic residues; sequence DEYHGEYPDDYPR.

It belongs to the calponin family.

In terms of biological role, thin filament-associated protein that is implicated in the regulation and modulation of smooth muscle contraction. It is capable of binding to actin, calmodulin and tropomyosin. The interaction of calponin with actin inhibits the actomyosin Mg-ATPase activity. The sequence is that of Calponin-3 (Cnn3) from Mus musculus (Mouse).